A 218-amino-acid chain; its full sequence is Small ribosomal subunit protein uS3 (218 aa).

Residues Ile-43 to Ser-113 enclose the KH type-2 domain.

This sequence belongs to the universal ribosomal protein uS3 family. As to quaternary structure, part of the 30S ribosomal subunit. Forms a tight complex with proteins S10 and S14.

Functionally, binds the lower part of the 30S subunit head. Binds mRNA in the 70S ribosome, positioning it for translation. This is Small ribosomal subunit protein uS3 from Rubrobacter xylanophilus (strain DSM 9941 / JCM 11954 / NBRC 16129 / PRD-1).